The following is a 256-amino-acid chain: Enolase-phosphatase E1 (256 aa).

2 residues coordinate Mg(2+): Asp14 and Glu16. Residues Ser142–Ser143 and Lys176 contribute to the substrate site. Asp201 serves as a coordination point for Mg(2+).

This sequence belongs to the HAD-like hydrolase superfamily. MasA/MtnC family. As to quaternary structure, monomer. Mg(2+) is required as a cofactor.

The protein resides in the cytoplasm. It is found in the nucleus. It catalyses the reaction 5-methylsulfanyl-2,3-dioxopentyl phosphate + H2O = 1,2-dihydroxy-5-(methylsulfanyl)pent-1-en-3-one + phosphate. It participates in amino-acid biosynthesis; L-methionine biosynthesis via salvage pathway; L-methionine from S-methyl-5-thio-alpha-D-ribose 1-phosphate: step 3/6. It functions in the pathway amino-acid biosynthesis; L-methionine biosynthesis via salvage pathway; L-methionine from S-methyl-5-thio-alpha-D-ribose 1-phosphate: step 4/6. Its function is as follows. Bifunctional enzyme that catalyzes the enolization of 2,3-diketo-5-methylthiopentyl-1-phosphate (DK-MTP-1-P) into the intermediate 2-hydroxy-3-keto-5-methylthiopentenyl-1-phosphate (HK-MTPenyl-1-P), which is then dephosphorylated to form the acireductone 1,2-dihydroxy-3-keto-5-methylthiopentene (DHK-MTPene). This chain is Enolase-phosphatase E1, found in Drosophila melanogaster (Fruit fly).